Consider the following 129-residue polypeptide: L-ectoine synthase (129 aa).

The protein belongs to the ectoine synthase family.

It catalyses the reaction (2S)-4-acetamido-2-aminobutanoate = L-ectoine + H2O. It participates in amine and polyamine biosynthesis; ectoine biosynthesis; L-ectoine from L-aspartate 4-semialdehyde: step 3/3. In terms of biological role, catalyzes the circularization of gamma-N-acetyl-alpha,gamma-diaminobutyric acid (ADABA) to ectoine (1,4,5,6-tetrahydro-2-methyl-4-pyrimidine carboxylic acid), which is an excellent osmoprotectant. In Marinomonas sp. (strain MWYL1), this protein is L-ectoine synthase.